Here is a 1100-residue protein sequence, read N- to C-terminus: DNA repair protein RAD1 (1100 aa).

Residues Met1 to Glu47 form a disordered region. Residues Arg20–Lys30 show a composition bias toward polar residues. Basic and acidic residues predominate over residues Ile31 to Glu47. Ser613 bears the Phosphoserine mark. Positions Val821–Glu901 constitute an ERCC4 domain. Residues Glu1063–Val1100 are disordered. A compositionally biased stretch (acidic residues) spans Glu1065–Leu1076. Position 1071 is a phosphoserine (Ser1071). Thr1072 carries the phosphothreonine modification. Positions Thr1082–Val1100 are enriched in basic and acidic residues.

Belongs to the XPF family. As to quaternary structure, component of the nucleotide excision repair factor 1 (NEF1) complex consisting of RAD1, RAD10 and RAD14. Interacts with SAW1.

It localises to the nucleus. In terms of biological role, involved in nucleotide excision repair of DNA damaged with UV light, bulky adducts, or cross-linking agents. Along with RAD10 forms an endonuclease that specifically degrades single-stranded DNA. The polypeptide is DNA repair protein RAD1 (RAD1) (Saccharomyces cerevisiae (strain ATCC 204508 / S288c) (Baker's yeast)).